Here is a 282-residue protein sequence, read N- to C-terminus: NADPH-dependent 7-cyano-7-deazaguanine reductase (282 aa).

88–90 (IES) contributes to the substrate binding site. NADPH is bound at residue 90–91 (SK). The active-site Thioimide intermediate is the C190. D197 serves as the catalytic Proton donor. 229–230 (HE) serves as a coordination point for substrate. 258 to 259 (RG) is an NADPH binding site.

Belongs to the GTP cyclohydrolase I family. QueF type 2 subfamily. As to quaternary structure, homodimer.

The protein localises to the cytoplasm. The enzyme catalyses 7-aminomethyl-7-carbaguanine + 2 NADP(+) = 7-cyano-7-deazaguanine + 2 NADPH + 3 H(+). It functions in the pathway tRNA modification; tRNA-queuosine biosynthesis. Catalyzes the NADPH-dependent reduction of 7-cyano-7-deazaguanine (preQ0) to 7-aminomethyl-7-deazaguanine (preQ1). The chain is NADPH-dependent 7-cyano-7-deazaguanine reductase from Salmonella paratyphi C (strain RKS4594).